A 183-amino-acid polypeptide reads, in one-letter code: ATP synthase subunit delta (183 aa).

The protein belongs to the ATPase delta chain family. In terms of assembly, F-type ATPases have 2 components, F(1) - the catalytic core - and F(0) - the membrane proton channel. F(1) has five subunits: alpha(3), beta(3), gamma(1), delta(1), epsilon(1). F(0) has three main subunits: a(1), b(2) and c(10-14). The alpha and beta chains form an alternating ring which encloses part of the gamma chain. F(1) is attached to F(0) by a central stalk formed by the gamma and epsilon chains, while a peripheral stalk is formed by the delta and b chains.

The protein resides in the cell membrane. Functionally, f(1)F(0) ATP synthase produces ATP from ADP in the presence of a proton or sodium gradient. F-type ATPases consist of two structural domains, F(1) containing the extramembraneous catalytic core and F(0) containing the membrane proton channel, linked together by a central stalk and a peripheral stalk. During catalysis, ATP synthesis in the catalytic domain of F(1) is coupled via a rotary mechanism of the central stalk subunits to proton translocation. This protein is part of the stalk that links CF(0) to CF(1). It either transmits conformational changes from CF(0) to CF(1) or is implicated in proton conduction. This Mycoplasmopsis synoviae (strain 53) (Mycoplasma synoviae) protein is ATP synthase subunit delta.